We begin with the raw amino-acid sequence, 807 residues long: Leucine--tRNA ligase (807 aa).

Positions 40-51 match the 'HIGH' region motif; it reads PYPSGSGLHVGH. The short motif at 576–580 is the 'KMSKS' region element; the sequence is KMSKS. Lys579 contacts ATP.

It belongs to the class-I aminoacyl-tRNA synthetase family.

It is found in the cytoplasm. It carries out the reaction tRNA(Leu) + L-leucine + ATP = L-leucyl-tRNA(Leu) + AMP + diphosphate. The polypeptide is Leucine--tRNA ligase (Chlorobaculum parvum (strain DSM 263 / NCIMB 8327) (Chlorobium vibrioforme subsp. thiosulfatophilum)).